The sequence spans 272 residues: Probable proteasome subunit alpha type-6 (272 aa).

Low complexity predominate over residues 243 to 261 (AARASRAAAEEPQAPTAEA). Positions 243–272 (AARASRAAAEEPQAPTAEAILDSADAMETD) are disordered.

This sequence belongs to the peptidase T1A family. As to quaternary structure, the 26S proteasome consists of a 20S proteasome core and two 19S regulatory subunits. The 20S proteasome core is composed of 28 subunits that are arranged in four stacked rings, resulting in a barrel-shaped structure. The two end rings are each formed by seven alpha subunits, and the two central rings are each formed by seven beta subunits. The catalytic chamber with the active sites is on the inside of the barrel.

Its subcellular location is the cytoplasm. The protein resides in the nucleus. The proteasome is a multicatalytic proteinase complex which is characterized by its ability to cleave peptides with Arg, Phe, Tyr, Leu, and Glu adjacent to the leaving group at neutral or slightly basic pH. The proteasome has an ATP-dependent proteolytic activity. This Schizosaccharomyces pombe (strain 972 / ATCC 24843) (Fission yeast) protein is Probable proteasome subunit alpha type-6.